The following is a 31-amino-acid chain: MLTITSYFGFLLAALTITSALLIGLSKIRLI.

Residues 4 to 24 (ITSYFGFLLAALTITSALLIG) form a helical membrane-spanning segment.

Belongs to the PetL family. As to quaternary structure, the 4 large subunits of the cytochrome b6-f complex are cytochrome b6, subunit IV (17 kDa polypeptide, PetD), cytochrome f and the Rieske protein, while the 4 small subunits are PetG, PetL, PetM and PetN. The complex functions as a dimer.

The protein localises to the plastid. It localises to the chloroplast thylakoid membrane. Its function is as follows. Component of the cytochrome b6-f complex, which mediates electron transfer between photosystem II (PSII) and photosystem I (PSI), cyclic electron flow around PSI, and state transitions. PetL is important for photoautotrophic growth as well as for electron transfer efficiency and stability of the cytochrome b6-f complex. In Magnolia grandiflora (Southern magnolia), this protein is Cytochrome b6-f complex subunit 6.